A 114-amino-acid chain; its full sequence is Gonadotropin subunit beta-1 (114 aa).

The first 19 residues, 1–19, serve as a signal peptide directing secretion; the sequence is MQLVLMAAVLALAEVGCFG. Intrachain disulfides connect Cys-20–Cys-66, Cys-32–Cys-80, Cys-37–Cys-114, Cys-43–Cys-92, Cys-47–Cys-94, and Cys-97–Cys-104. The N-linked (GlcNAc...) asparagine glycan is linked to Asn-24.

It belongs to the glycoprotein hormones subunit beta family. In terms of assembly, heterodimer of an alpha and a beta chain.

Its subcellular location is the secreted. Its function is as follows. Involved in gametogenesis and steroidogenesis. The polypeptide is Gonadotropin subunit beta-1 (cgba) (Fundulus heteroclitus (Killifish)).